Consider the following 236-residue polypeptide: Histone H1 (236 aa).

Residues 1–10 (MPPKKTETKA) show a composition bias toward basic and acidic residues. Disordered stretches follow at residues 1–36 (MPPK…SPST) and 94–236 (KGVF…AEKA). The span at 11-36 (ADASAAAAPAPAAAPTSAPKTKSPST) shows a compositional bias: low complexity. Residues 36-111 (THASYLDMIT…GPSGGTKLAK (76 aa)) form the H15 domain. Basic residues predominate over residues 109 to 122 (LAKKVAKPAPKKAA). Residues 123–150 (PKKETKEKKPAAAKKEGAAKKETKEKKA) are compositionally biased toward basic and acidic residues. Residues 153-162 (AKKAAAPKKA) are compositionally biased toward low complexity. Basic and acidic residues predominate over residues 165–174 (PKKEVKEKKA). Positions 202–220 (AKSTAKPAAAKKAAAPKKA) are enriched in low complexity. Residues 224–236 (KKAEKAEPAAEKA) show a composition bias toward basic and acidic residues.

It belongs to the histone H1/H5 family.

The protein localises to the nucleus. Its subcellular location is the chromosome. Its function is as follows. Could act as an H1-type linker histone. The protein is Histone H1 (hH1) of Neurospora crassa (strain ATCC 24698 / 74-OR23-1A / CBS 708.71 / DSM 1257 / FGSC 987).